A 179-amino-acid chain; its full sequence is ADP-ribosylation factor (179 aa).

The N-myristoyl glycine moiety is linked to residue Gly2. Residues 24–31 (GLDAAGKT), 67–71 (DVGGQ), and 126–129 (NKQD) contribute to the GTP site.

Belongs to the small GTPase superfamily. Arf family.

The protein resides in the golgi apparatus. Its function is as follows. GTP-binding protein involved in protein trafficking; may modulate vesicle budding and uncoating within the Golgi apparatus. This is ADP-ribosylation factor (ARF1) from Candida albicans (strain SC5314 / ATCC MYA-2876) (Yeast).